The following is a 229-amino-acid chain: Flagellar L-ring protein (229 aa).

An N-terminal signal peptide occupies residues 1-23; that stretch reads MLSRLGARALVCLAGVAMLAASG. Residue cysteine 24 is the site of N-palmitoyl cysteine attachment. A lipid anchor (S-diacylglycerol cysteine) is attached at cysteine 24.

Belongs to the FlgH family. The basal body constitutes a major portion of the flagellar organelle and consists of four rings (L,P,S, and M) mounted on a central rod.

The protein localises to the cell outer membrane. It localises to the bacterial flagellum basal body. Functionally, assembles around the rod to form the L-ring and probably protects the motor/basal body from shearing forces during rotation. The chain is Flagellar L-ring protein from Cupriavidus taiwanensis (strain DSM 17343 / BCRC 17206 / CCUG 44338 / CIP 107171 / LMG 19424 / R1) (Ralstonia taiwanensis (strain LMG 19424)).